The following is a 1371-amino-acid chain: Serine protease pic autotransporter (1371 aa).

The signal sequence occupies residues 1–55 (MNKVYSLKYCPVTGGLIVVSELASRVIKKTCRRLTHILLAGIPAVYLYYPQISQA). Positions 56-301 (GIVRSDIAYQ…NVIPTDYLNQ (246 aa)) constitute a Peptidase S6 domain. Active-site charge relay system residues include histidine 127, aspartate 155, and serine 258. Residues 1105-1371 (DTNGDAGAWA…AVNANFRYMF (267 aa)) form the Autotransporter domain.

In terms of processing, cleaved to release the mature protein from the outer membrane.

Its subcellular location is the periplasm. It localises to the secreted. The protein localises to the cell surface. The protein resides in the cell outer membrane. Involved in virulence of uropathogenic E.coli although it is not known how it contributes to it. Has no mucinase activity. The chain is Serine protease pic autotransporter (pic) from Escherichia coli O6:H1 (strain CFT073 / ATCC 700928 / UPEC).